Here is a 254-residue protein sequence, read N- to C-terminus: Phosphoribosylaminoimidazole-succinocarboxamide synthase (254 aa).

The protein belongs to the SAICAR synthetase family.

The enzyme catalyses 5-amino-1-(5-phospho-D-ribosyl)imidazole-4-carboxylate + L-aspartate + ATP = (2S)-2-[5-amino-1-(5-phospho-beta-D-ribosyl)imidazole-4-carboxamido]succinate + ADP + phosphate + 2 H(+). It participates in purine metabolism; IMP biosynthesis via de novo pathway; 5-amino-1-(5-phospho-D-ribosyl)imidazole-4-carboxamide from 5-amino-1-(5-phospho-D-ribosyl)imidazole-4-carboxylate: step 1/2. The polypeptide is Phosphoribosylaminoimidazole-succinocarboxamide synthase (Acidiphilium cryptum (strain JF-5)).